The following is a 149-amino-acid chain: Transcriptional repressor NrdR (149 aa).

A zinc finger spans residues 3–34 (CPFCAAEETKVVDSRLAADGYQIRRRRECTSC). The ATP-cone domain maps to 49–139 (PYVIKNNGNR…VYLSFDDIEE (91 aa)).

The protein belongs to the NrdR family. Zn(2+) is required as a cofactor.

Negatively regulates transcription of bacterial ribonucleotide reductase nrd genes and operons by binding to NrdR-boxes. The polypeptide is Transcriptional repressor NrdR (Actinobacillus pleuropneumoniae serotype 3 (strain JL03)).